The following is a 248-amino-acid chain: UPF0524 protein C3orf70 homolog (248 aa).

A disordered region spans residues 169-248 (KESDTPKLGH…EVIETMETTV (80 aa)). The segment covering 200-227 (SCDEDTEEGAELSSEEDYSPESSWEPDE) has biased composition (acidic residues).

The protein belongs to the UPF0524 family.

In terms of biological role, may play a role in neuronal and neurobehavioral development. The sequence is that of UPF0524 protein C3orf70 homolog from Mus musculus (Mouse).